The following is a 310-amino-acid chain: tRNA dimethylallyltransferase (310 aa).

13-20 (GPTASGKT) contributes to the ATP binding site. 15–20 (TASGKT) contacts substrate. 4 interaction with substrate tRNA regions span residues 38-41 (DSAL), 162-166 (QRLSR), 243-248 (RCVGYR), and 276-283 (KRQITWLR).

The protein belongs to the IPP transferase family. In terms of assembly, monomer. Mg(2+) is required as a cofactor.

It carries out the reaction adenosine(37) in tRNA + dimethylallyl diphosphate = N(6)-dimethylallyladenosine(37) in tRNA + diphosphate. In terms of biological role, catalyzes the transfer of a dimethylallyl group onto the adenine at position 37 in tRNAs that read codons beginning with uridine, leading to the formation of N6-(dimethylallyl)adenosine (i(6)A). The polypeptide is tRNA dimethylallyltransferase (Vibrio parahaemolyticus serotype O3:K6 (strain RIMD 2210633)).